The following is a 455-amino-acid chain: Cysteine--tRNA ligase (455 aa).

Cys-28 is a binding site for Zn(2+). Positions 30–40 (MTVYDYCHLGH) match the 'HIGH' region motif. Positions 209, 234, and 238 each coordinate Zn(2+). Residues 266–270 (KMSKS) carry the 'KMSKS' region motif. Position 269 (Lys-269) interacts with ATP.

This sequence belongs to the class-I aminoacyl-tRNA synthetase family. In terms of assembly, monomer. It depends on Zn(2+) as a cofactor.

The protein localises to the cytoplasm. The enzyme catalyses tRNA(Cys) + L-cysteine + ATP = L-cysteinyl-tRNA(Cys) + AMP + diphosphate. In Methylobacillus flagellatus (strain ATCC 51484 / DSM 6875 / VKM B-1610 / KT), this protein is Cysteine--tRNA ligase.